Reading from the N-terminus, the 488-residue chain is Argininosuccinate lyase (488 aa).

Belongs to the lyase 1 family. Argininosuccinate lyase subfamily.

The protein resides in the cytoplasm. It carries out the reaction 2-(N(omega)-L-arginino)succinate = fumarate + L-arginine. The protein operates within amino-acid biosynthesis; L-arginine biosynthesis; L-arginine from L-ornithine and carbamoyl phosphate: step 3/3. This Corynebacterium jeikeium (strain K411) protein is Argininosuccinate lyase.